The following is a 526-amino-acid chain: ESX-1 secretion-associated protein EspB (526 aa).

Residues 1-23 show a composition bias toward basic and acidic residues; sequence MSEELKYELPGLERKAHECESTR. Disordered stretches follow at residues 1-35, 91-110, and 271-526; these read MSEELKYELPGLERKAHECESTRPEGPGDATKPDE, RQMNGSDAPPPAAEAVVPDM, and QIQE…GKQQ. Residues 303–328 are compositionally biased toward gly residues; sequence GGPGGPGSGSGGGSGGGASGGSGGGT. Low complexity predominate over residues 335 to 362; the sequence is PSTDPSMSPMSTNSAGEEQSSGSPSSGG. Residues 363-387 show a composition bias toward gly residues; it reads SSSGGSPSGGSPSGGGAPSSGGMPE. Positions 393–405 are enriched in low complexity; that stretch reads DMPGGPDIPGLDD. The segment covering 413 to 429 has biased composition (gly residues); that stretch reads AGGGGGGGVGGGGGGGM. Residues 430–440 show a composition bias toward low complexity; sequence PAAPLGPAVGA. The segment covering 451 to 484 has biased composition (gly residues); sequence RGGGVGVPTGTGGGAGGMMGGGMGGMGAGHGQGQ. The segment covering 485–508 has biased composition (basic and acidic residues); sequence GKEKKRDPKLAPDEDLYTEDRAHS.

This sequence belongs to the EspB family.

Its subcellular location is the secreted. Involved in DNA conjugation, at least in the recipient strain. The chain is ESX-1 secretion-associated protein EspB from Mycolicibacterium smegmatis (strain MKD8) (Mycobacterium smegmatis).